The following is a 188-amino-acid chain: UPF0398 protein SSP1297 (188 aa).

It belongs to the UPF0398 family.

In Staphylococcus saprophyticus subsp. saprophyticus (strain ATCC 15305 / DSM 20229 / NCIMB 8711 / NCTC 7292 / S-41), this protein is UPF0398 protein SSP1297.